Here is a 190-residue protein sequence, read N- to C-terminus: Probable nicotinate-nucleotide adenylyltransferase (190 aa).

It belongs to the NadD family.

The catalysed reaction is nicotinate beta-D-ribonucleotide + ATP + H(+) = deamido-NAD(+) + diphosphate. It participates in cofactor biosynthesis; NAD(+) biosynthesis; deamido-NAD(+) from nicotinate D-ribonucleotide: step 1/1. Functionally, catalyzes the reversible adenylation of nicotinate mononucleotide (NaMN) to nicotinic acid adenine dinucleotide (NaAD). This is Probable nicotinate-nucleotide adenylyltransferase from Azobacteroides pseudotrichonymphae genomovar. CFP2.